The following is a 572-amino-acid chain: 2-succinyl-5-enolpyruvyl-6-hydroxy-3-cyclohexene-1-carboxylate synthase (572 aa).

The protein belongs to the TPP enzyme family. MenD subfamily. In terms of assembly, homodimer. Mg(2+) is required as a cofactor. Mn(2+) serves as cofactor. It depends on thiamine diphosphate as a cofactor.

It catalyses the reaction isochorismate + 2-oxoglutarate + H(+) = 5-enolpyruvoyl-6-hydroxy-2-succinyl-cyclohex-3-ene-1-carboxylate + CO2. The protein operates within quinol/quinone metabolism; 1,4-dihydroxy-2-naphthoate biosynthesis; 1,4-dihydroxy-2-naphthoate from chorismate: step 2/7. It functions in the pathway quinol/quinone metabolism; menaquinone biosynthesis. Its function is as follows. Catalyzes the thiamine diphosphate-dependent decarboxylation of 2-oxoglutarate and the subsequent addition of the resulting succinic semialdehyde-thiamine pyrophosphate anion to isochorismate to yield 2-succinyl-5-enolpyruvyl-6-hydroxy-3-cyclohexene-1-carboxylate (SEPHCHC). The chain is 2-succinyl-5-enolpyruvyl-6-hydroxy-3-cyclohexene-1-carboxylate synthase from Shewanella amazonensis (strain ATCC BAA-1098 / SB2B).